The following is a 193-amino-acid chain: Protein SINE3 (193 aa).

Positions Ser15–Glu35 are disordered. Residues Gly18–Glu35 are compositionally biased toward basic and acidic residues. Positions Val155–Thr193 constitute a KASH domain. The helical transmembrane segment at Ile161–Ser181 threads the bilayer. The Required for nuclear localization motif lies at Pro190–Thr193.

In terms of assembly, interacts with SUN1 and SUN2.

Its subcellular location is the nucleus membrane. The chain is Protein SINE3 from Arabidopsis thaliana (Mouse-ear cress).